A 393-amino-acid polypeptide reads, in one-letter code: MAKEAYKREKPHVNIGTIGHVDHGKTTLTAAITTVLAKKGMAQLREFGDIDKAPEERERGITISTAHVEYETDKRHYAHIDCPGHADYIKNMITGAAQMDGAILVVAGTDGPMPQTREHILLARQVNVPALVVFLNKVDIADPELIELVELELRELLSEYEFPGDDIPIIKGSALKALDGDPESEAAIMELMDAVDSYIPEPVRDVDKPFLMPIEDVFSISGRGTVGTGRIESGVIKIGEEVEIVGIKPTRKSVVTGIEMFQKTLDQGQAGDNAGILFRGVDKEELERGMVIAKPGTITPHTKFKAEVYILKKEEGGRHTPFFNNYRPQFYFRTTDVTGAVTLPEGVEMVMPGDNLSVEVELIVPIAMDENLRFAIREGGRTVGAGTVTQIIE.

Residues 10–203 form the tr-type G domain; it reads KPHVNIGTIG…AVDSYIPEPV (194 aa). A G1 region spans residues 19-26; that stretch reads GHVDHGKT. 19–26 is a binding site for GTP; it reads GHVDHGKT. Residue T26 coordinates Mg(2+). The tract at residues 60-64 is G2; it reads GITIS. The interval 81-84 is G3; the sequence is DCPG. GTP contacts are provided by residues 81–85 and 136–139; these read DCPGH and NKVD. The segment at 136 to 139 is G4; that stretch reads NKVD. The tract at residues 173 to 175 is G5; the sequence is SAL.

It belongs to the TRAFAC class translation factor GTPase superfamily. Classic translation factor GTPase family. EF-Tu/EF-1A subfamily. As to quaternary structure, monomer.

Its subcellular location is the cytoplasm. The enzyme catalyses GTP + H2O = GDP + phosphate + H(+). Functionally, GTP hydrolase that promotes the GTP-dependent binding of aminoacyl-tRNA to the A-site of ribosomes during protein biosynthesis. This Prosthecochloris aestuarii (strain DSM 271 / SK 413) protein is Elongation factor Tu.